The chain runs to 203 residues: Arcadin-2 (203 aa).

As to quaternary structure, interacts with crenactin.

It localises to the cytoplasm. The protein resides in the cytoskeleton. In terms of biological role, part of an actin-like archaeal cytoskeleton. Prevents polymerization of crenactin filaments by binding its C-terminus into crenactin's hydrophobic groove. May act by competing with the D-loop of the following crenactin subunit for the hydrophobic groove. The protein is Arcadin-2 of Pyrobaculum calidifontis (strain DSM 21063 / JCM 11548 / VA1).